We begin with the raw amino-acid sequence, 533 residues long: Calcineurin-interacting protein 3 (533 aa).

Disordered regions lie at residues methionine 1 to isoleucine 30, proline 53 to arginine 85, and methionine 359 to proline 404. Residues lysine 61–arginine 85 are compositionally biased toward basic and acidic residues. Polar residues predominate over residues methionine 359–serine 372. Residues proline 373 to isoleucine 384 show a composition bias toward basic and acidic residues.

It localises to the nucleus. This Caenorhabditis elegans protein is Calcineurin-interacting protein 3.